The chain runs to 439 residues: Transmembrane protease serine 11F (439 aa).

Residues 1 to 33 (MMYAPVEFSQTAYPRIEYQRRQQQFWDPIRLAL) lie on the Cytoplasmic side of the membrane. A helical; Signal-anchor for type II membrane protein transmembrane segment spans residues 34 to 54 (FTLAIVAIVGITIGIVTHFVV). Residues 55-439 (EDDKSFYYLA…RDWIASKTGL (385 aa)) are Extracellular-facing. One can recognise an SEA domain in the interval 58-176 (KSFYYLASFQ…PSFSLTPIDS (119 aa)). A Peptidase S1 domain is found at 207-438 (IVQGRETAME…YRDWIASKTG (232 aa)). An intrachain disulfide couples Cys234 to Cys250. Active-site charge relay system residues include His249 and Asp294. Intrachain disulfides connect Cys359–Cys375 and Cys386–Cys414. The active-site Charge relay system is Ser390.

The protein belongs to the peptidase S1 family.

It localises to the membrane. Functionally, probable serine protease. This Mus musculus (Mouse) protein is Transmembrane protease serine 11F (Tmprss11f).